The following is a 159-amino-acid chain: uncharacterized protein (159 aa).

The signal sequence occupies residues 1 to 20; that stretch reads MKKIIAMSLLMFSVVMSVNA.

This is an uncharacterized protein from Pasteurella multocida (strain Pm70).